The sequence spans 502 residues: Cytochrome P450 2J2 (502 aa).

C448 is a binding site for heme.

It belongs to the cytochrome P450 family. Requires heme as cofactor. Highly expressed in heart, present at lower levels in liver, kidney and skeletal muscle (at protein level).

It localises to the endoplasmic reticulum membrane. The protein localises to the microsome membrane. It carries out the reaction (5Z,8Z,11Z,14Z)-eicosatetraenoate + reduced [NADPH--hemoprotein reductase] + O2 = 5,6-epoxy-(8Z,11Z,14Z)-eicosatrienoate + oxidized [NADPH--hemoprotein reductase] + H2O + H(+). It catalyses the reaction (5Z,8Z,11Z,14Z)-eicosatetraenoate + reduced [NADPH--hemoprotein reductase] + O2 = (8R,9S)-epoxy-(5Z,11Z,14Z)-eicosatrienoate + oxidized [NADPH--hemoprotein reductase] + H2O + H(+). The catalysed reaction is (5Z,8Z,11Z,14Z)-eicosatetraenoate + reduced [NADPH--hemoprotein reductase] + O2 = (8S,9R)-epoxy-(5Z,11Z,14Z)-eicosatrienoate + oxidized [NADPH--hemoprotein reductase] + H2O + H(+). The enzyme catalyses (5Z,8Z,11Z,14Z)-eicosatetraenoate + reduced [NADPH--hemoprotein reductase] + O2 = (11R,12S)-epoxy-(5Z,8Z,14Z)-eicosatrienoate + oxidized [NADPH--hemoprotein reductase] + H2O + H(+). It carries out the reaction (5Z,8Z,11Z,14Z)-eicosatetraenoate + reduced [NADPH--hemoprotein reductase] + O2 = (11S,12R)-epoxy-(5Z,8Z,14Z)-eicosatrienoate + oxidized [NADPH--hemoprotein reductase] + H2O + H(+). It catalyses the reaction (5Z,8Z,11Z,14Z)-eicosatetraenoate + reduced [NADPH--hemoprotein reductase] + O2 = (14R,15S)-epoxy-(5Z,8Z,11Z)-eicosatrienoate + oxidized [NADPH--hemoprotein reductase] + H2O + H(+). The catalysed reaction is (5Z,8Z,11Z,14Z)-eicosatetraenoate + reduced [NADPH--hemoprotein reductase] + O2 = (14S,15R)-epoxy-(5Z,8Z,11Z)-eicosatrienoate + oxidized [NADPH--hemoprotein reductase] + H2O + H(+). The enzyme catalyses (15S)-hydroperoxy-(5Z,8Z,11Z,13E)-eicosatetraenoate = (13S)-hydroxy-(14S,15S)-epoxy-(5Z,8Z,11Z)-eicosatrienoate. It carries out the reaction (15S)-hydroperoxy-(5Z,8Z,11Z,13E)-eicosatetraenoate = (13R)-hydroxy-(14S,15S)-epoxy-(5Z,8Z,11Z)-eicosatrienoate. It catalyses the reaction (5Z,8Z,11Z,14Z,17Z)-eicosapentaenoate + reduced [NADPH--hemoprotein reductase] + O2 = (17R,18S)-epoxy-(5Z,8Z,11Z,14Z)-eicosatetraenoate + oxidized [NADPH--hemoprotein reductase] + H2O + H(+). The catalysed reaction is (5Z,8Z,11Z,14Z,17Z)-eicosapentaenoate + reduced [NADPH--hemoprotein reductase] + O2 = (17S,18R)-epoxy-(5Z,8Z,11Z,14Z)-eicosatetraenoate + oxidized [NADPH--hemoprotein reductase] + H2O + H(+). The enzyme catalyses (4Z,7Z,10Z,13Z,16Z,19Z)-docosahexaenoate + reduced [NADPH--hemoprotein reductase] + O2 = (19R,20S)-epoxy-(4Z,7Z,10Z,13Z,16Z)-docosapentaenoate + oxidized [NADPH--hemoprotein reductase] + H2O + H(+). It carries out the reaction (4Z,7Z,10Z,13Z,16Z,19Z)-docosahexaenoate + reduced [NADPH--hemoprotein reductase] + O2 = (19S,20R)-epoxy-(4Z,7Z,10Z,13Z,16Z)-docosapentaenoate + oxidized [NADPH--hemoprotein reductase] + H2O + H(+). It catalyses the reaction albendazole + reduced [NADPH--hemoprotein reductase] + O2 = hydroxyalbendazole + oxidized [NADPH--hemoprotein reductase] + H2O + H(+). The catalysed reaction is albendazole + reduced [NADPH--hemoprotein reductase] + O2 = albendazole S-oxide + oxidized [NADPH--hemoprotein reductase] + H2O + H(+). The enzyme catalyses fenbendazole + reduced [NADPH--hemoprotein reductase] + O2 = fenbendazole S-oxide + oxidized [NADPH--hemoprotein reductase] + H2O + H(+). It participates in lipid metabolism; arachidonate metabolism. In terms of biological role, a cytochrome P450 monooxygenase involved in the metabolism of polyunsaturated fatty acids (PUFA) in the cardiovascular system. Mechanistically, uses molecular oxygen inserting one oxygen atom into a substrate, and reducing the second into a water molecule, with two electrons provided by NADPH via cytochrome P450 reductase (NADPH--hemoprotein reductase). Catalyzes the epoxidation of double bonds of PUFA. Converts arachidonic acid to four regioisomeric epoxyeicosatrienoic acids (EpETrE), likely playing a major role in the epoxidation of endogenous cardiac arachidonic acid pools. In endothelial cells, participates in eicosanoids metabolism by converting hydroperoxide species into hydroxy epoxy metabolites. In combination with 15-lipoxygenase metabolizes arachidonic acid and converts hydroperoxyicosatetraenoates (HpETEs) into hydroxy epoxy eicosatrienoates (HEETs), which are precursors of vasodilatory trihydroxyicosatrienoic acids (THETAs). This hydroperoxide isomerase activity is NADPH- and O2-independent. Catalyzes the monooxygenation of a various xenobiotics, such as danazol, amiodarone, terfenadine, astemizole, thioridazine, tamoxifen, cyclosporin A and nabumetone. Catalyzes hydroxylation of the anthelmintics albendazole and fenbendazole. Catalyzes the sulfoxidation of fenbedazole. The protein is Cytochrome P450 2J2 of Homo sapiens (Human).